A 349-amino-acid polypeptide reads, in one-letter code: Protein-glutamate methylesterase/protein-glutamine glutaminase (349 aa).

The 118-residue stretch at 5–122 folds into the Response regulatory domain; that stretch reads RVLSVDDSAL…REGMLAYSEM (118 aa). Asp-56 carries the post-translational modification 4-aspartylphosphate. A CheB-type methylesterase domain is found at 152 to 344; the sequence is LLSSEKLIAI…QQMLATISAG (193 aa). Catalysis depends on residues Ser-164, His-190, and Asp-286.

Belongs to the CheB family. Post-translationally, phosphorylated by CheA. Phosphorylation of the N-terminal regulatory domain activates the methylesterase activity.

Its subcellular location is the cytoplasm. The enzyme catalyses [protein]-L-glutamate 5-O-methyl ester + H2O = L-glutamyl-[protein] + methanol + H(+). It catalyses the reaction L-glutaminyl-[protein] + H2O = L-glutamyl-[protein] + NH4(+). Functionally, involved in chemotaxis. Part of a chemotaxis signal transduction system that modulates chemotaxis in response to various stimuli. Catalyzes the demethylation of specific methylglutamate residues introduced into the chemoreceptors (methyl-accepting chemotaxis proteins or MCP) by CheR. Also mediates the irreversible deamidation of specific glutamine residues to glutamic acid. This chain is Protein-glutamate methylesterase/protein-glutamine glutaminase, found in Shigella flexneri.